We begin with the raw amino-acid sequence, 120 residues long: Large ribosomal subunit protein bL17 (120 aa).

The protein belongs to the bacterial ribosomal protein bL17 family. As to quaternary structure, part of the 50S ribosomal subunit. Contacts protein L32.

The polypeptide is Large ribosomal subunit protein bL17 (Halalkalibacterium halodurans (strain ATCC BAA-125 / DSM 18197 / FERM 7344 / JCM 9153 / C-125) (Bacillus halodurans)).